Here is a 273-residue protein sequence, read N- to C-terminus: Ribosomal RNA small subunit methyltransferase I (273 aa).

The protein belongs to the methyltransferase superfamily. RsmI family.

It is found in the cytoplasm. It carries out the reaction cytidine(1402) in 16S rRNA + S-adenosyl-L-methionine = 2'-O-methylcytidine(1402) in 16S rRNA + S-adenosyl-L-homocysteine + H(+). In terms of biological role, catalyzes the 2'-O-methylation of the ribose of cytidine 1402 (C1402) in 16S rRNA. This is Ribosomal RNA small subunit methyltransferase I from Xylella fastidiosa (strain 9a5c).